An 880-amino-acid polypeptide reads, in one-letter code: Beta-N-acetylglucosaminidase (880 aa).

Residues 1 to 27 form the signal peptide; the sequence is MKKRLIAPMLLSAASLAFFAMSGSAQA. SPOR domains lie at 70–149, 150–229, and 230–311; these read SGTT…VKAY, GAAQ…LKET, and VKGQ…YQQV. Tandem repeats lie at residues 439-473 and 479-513. The SH3b domain occupies 630-700; the sequence is TATSTVTADV…VDPNNFSRDS (71 aa).

Belongs to the glycosyl hydrolase 73 family. Homodimer.

It is found in the secreted. The protein localises to the cell wall. It carries out the reaction an N(4)-(oligosaccharide-(1-&gt;3)-[oligosaccharide-(1-&gt;6)]-beta-D-Man-(1-&gt;4)-beta-D-GlcNAc-(1-&gt;4)-alpha-D-GlcNAc)-L-asparaginyl-[protein] + H2O = an oligosaccharide-(1-&gt;3)-[oligosaccharide-(1-&gt;6)]-beta-D-Man-(1-&gt;4)-D-GlcNAc + N(4)-(N-acetyl-beta-D-glucosaminyl)-L-asparaginyl-[protein]. Inhibited by diethyl pyrocarbonate, slightly by EDTA. Not inhibited by PMSF, diisopropyl fluorophosphate, 2-mercaptoethanol or N-ethylmaleimide. In terms of biological role, cell wall hydrolase not involved in cell autolysis, competence, sporulation or germination. It hydrolyzes the beta-1,4 glycan bond between the N-acetylglucosaminyl and the N-acetylmuramoyl residues in the glycan chain. This is Beta-N-acetylglucosaminidase (lytD) from Bacillus subtilis (strain 168).